The chain runs to 476 residues: Aspartyl/glutamyl-tRNA(Asn/Gln) amidotransferase subunit B (476 aa).

It belongs to the GatB/GatE family. GatB subfamily. Heterotrimer of A, B and C subunits.

The catalysed reaction is L-glutamyl-tRNA(Gln) + L-glutamine + ATP + H2O = L-glutaminyl-tRNA(Gln) + L-glutamate + ADP + phosphate + H(+). The enzyme catalyses L-aspartyl-tRNA(Asn) + L-glutamine + ATP + H2O = L-asparaginyl-tRNA(Asn) + L-glutamate + ADP + phosphate + 2 H(+). In terms of biological role, allows the formation of correctly charged Asn-tRNA(Asn) or Gln-tRNA(Gln) through the transamidation of misacylated Asp-tRNA(Asn) or Glu-tRNA(Gln) in organisms which lack either or both of asparaginyl-tRNA or glutaminyl-tRNA synthetases. The reaction takes place in the presence of glutamine and ATP through an activated phospho-Asp-tRNA(Asn) or phospho-Glu-tRNA(Gln). The protein is Aspartyl/glutamyl-tRNA(Asn/Gln) amidotransferase subunit B of Clostridium botulinum (strain Alaska E43 / Type E3).